The sequence spans 348 residues: NADH-ubiquinone oxidoreductase chain 2 (348 aa).

11 helical membrane passes run 1–21, 23–43, 56–76, 92–112, 123–143, 148–168, 176–196, 198–218, 242–262, 272–292, and 321–341; these read MMTL…MFSS, WFFA…MMLF, YFIS…WNYF, ITLI…HFWL, MGLI…IQVS, NMYI…FGGL, LLAY…AVSA, LSWV…TILI, CILV…FLKL, SLIL…FFYL, and LLFN…PFMI.

The protein belongs to the complex I subunit 2 family.

The protein localises to the mitochondrion inner membrane. It carries out the reaction a ubiquinone + NADH + 5 H(+)(in) = a ubiquinol + NAD(+) + 4 H(+)(out). Functionally, core subunit of the mitochondrial membrane respiratory chain NADH dehydrogenase (Complex I) that is believed to belong to the minimal assembly required for catalysis. Complex I functions in the transfer of electrons from NADH to the respiratory chain. The immediate electron acceptor for the enzyme is believed to be ubiquinone. The polypeptide is NADH-ubiquinone oxidoreductase chain 2 (MT-ND2) (Myxine glutinosa (Atlantic hagfish)).